The primary structure comprises 132 residues: Large ribosomal subunit protein bL17 (132 aa).

It belongs to the bacterial ribosomal protein bL17 family. In terms of assembly, part of the 50S ribosomal subunit. Contacts protein L32.

In Ralstonia pickettii (strain 12J), this protein is Large ribosomal subunit protein bL17.